Reading from the N-terminus, the 280-residue chain is 2-dehydro-3-deoxyphosphooctonate aldolase (280 aa).

Belongs to the KdsA family.

The protein resides in the cytoplasm. The enzyme catalyses D-arabinose 5-phosphate + phosphoenolpyruvate + H2O = 3-deoxy-alpha-D-manno-2-octulosonate-8-phosphate + phosphate. Its pathway is carbohydrate biosynthesis; 3-deoxy-D-manno-octulosonate biosynthesis; 3-deoxy-D-manno-octulosonate from D-ribulose 5-phosphate: step 2/3. It participates in bacterial outer membrane biogenesis; lipopolysaccharide biosynthesis. The sequence is that of 2-dehydro-3-deoxyphosphooctonate aldolase from Nitrosococcus oceani (strain ATCC 19707 / BCRC 17464 / JCM 30415 / NCIMB 11848 / C-107).